The following is a 330-amino-acid chain: Aspartate--ammonia ligase (330 aa).

This sequence belongs to the class-II aminoacyl-tRNA synthetase family. AsnA subfamily.

It localises to the cytoplasm. It catalyses the reaction L-aspartate + NH4(+) + ATP = L-asparagine + AMP + diphosphate + H(+). It participates in amino-acid biosynthesis; L-asparagine biosynthesis; L-asparagine from L-aspartate (ammonia route): step 1/1. The protein is Aspartate--ammonia ligase of Haemophilus influenzae (strain PittEE).